The sequence spans 383 residues: 1-deoxy-D-xylulose 5-phosphate reductoisomerase (383 aa).

Positions 10, 11, 12, 13, 38, and 121 each coordinate NADPH. Residue K122 participates in 1-deoxy-D-xylulose 5-phosphate binding. E123 contributes to the NADPH binding site. D147 serves as a coordination point for Mn(2+). 4 residues coordinate 1-deoxy-D-xylulose 5-phosphate: S148, E149, S172, and H195. E149 contacts Mn(2+). G201 provides a ligand contact to NADPH. Residues S208, N213, K214, and E217 each contribute to the 1-deoxy-D-xylulose 5-phosphate site. Residue E217 participates in Mn(2+) binding.

It belongs to the DXR family. Mg(2+) is required as a cofactor. Requires Mn(2+) as cofactor.

It carries out the reaction 2-C-methyl-D-erythritol 4-phosphate + NADP(+) = 1-deoxy-D-xylulose 5-phosphate + NADPH + H(+). It functions in the pathway isoprenoid biosynthesis; isopentenyl diphosphate biosynthesis via DXP pathway; isopentenyl diphosphate from 1-deoxy-D-xylulose 5-phosphate: step 1/6. Functionally, catalyzes the NADPH-dependent rearrangement and reduction of 1-deoxy-D-xylulose-5-phosphate (DXP) to 2-C-methyl-D-erythritol 4-phosphate (MEP). The polypeptide is 1-deoxy-D-xylulose 5-phosphate reductoisomerase (Vesicomyosocius okutanii subsp. Calyptogena okutanii (strain HA)).